Reading from the N-terminus, the 215-residue chain is Putative B3 domain-containing protein Os11g0625400 (215 aa).

The segment at residues 1–51 is a DNA-binding region (TF-B3 1); sequence MTVELEKIAGSFFISKGWKTFVHRTGLLSGQYIRFQVLTPSKINVLLFDKK. Positions 92 to 117 are disordered; sequence SHTSNKETSSDSRTESMTDIPSSSDN. A compositionally biased stretch (basic and acidic residues) spans 95-107; the sequence is SNKETSSDSRTES. Residues 108 to 117 show a composition bias toward polar residues; that stretch reads MTDIPSSSDN. The TF-B3 2 DNA-binding region spans 123-215; it reads DIKNYISIIG…PNVKITIDVL (93 aa).

It localises to the nucleus. This chain is Putative B3 domain-containing protein Os11g0625400, found in Oryza sativa subsp. japonica (Rice).